The following is a 128-amino-acid chain: Large ribosomal subunit protein bL17 (128 aa).

The protein belongs to the bacterial ribosomal protein bL17 family. In terms of assembly, part of the 50S ribosomal subunit. Contacts protein L32.

The polypeptide is Large ribosomal subunit protein bL17 (Pseudomonas syringae pv. syringae (strain B728a)).